Here is a 305-residue protein sequence, read N- to C-terminus: Virulence plasmid integrase pGP7-D (305 aa).

Residues 13–99 (LTFGEASEIW…CYISFTKFLY (87 aa)) form the Core-binding (CB) domain. In terms of domain architecture, Tyr recombinase spans 127–303 (VKTVSISKKE…GNSSVANIPT (177 aa)). Active-site residues include lysine 188 and arginine 257. Tyrosine 289 functions as the O-(3'-phospho-DNA)-tyrosine intermediate in the catalytic mechanism.

It belongs to the 'phage' integrase family.

The chain is Virulence plasmid integrase pGP7-D from Chlamydia muridarum (strain MoPn / Nigg).